The sequence spans 940 residues: Isoleucine--tRNA ligase (940 aa).

A 'HIGH' region motif is present at residues 58–68 (PYANGDIHIGH). Glu564 is an L-isoleucyl-5'-AMP binding site. A 'KMSKS' region motif is present at residues 605-609 (KMSKS). Position 608 (Lys608) interacts with ATP. Zn(2+)-binding residues include Cys903, Cys906, Cys923, and Cys926.

It belongs to the class-I aminoacyl-tRNA synthetase family. IleS type 1 subfamily. In terms of assembly, monomer. Zn(2+) serves as cofactor.

It is found in the cytoplasm. The enzyme catalyses tRNA(Ile) + L-isoleucine + ATP = L-isoleucyl-tRNA(Ile) + AMP + diphosphate. Functionally, catalyzes the attachment of isoleucine to tRNA(Ile). As IleRS can inadvertently accommodate and process structurally similar amino acids such as valine, to avoid such errors it has two additional distinct tRNA(Ile)-dependent editing activities. One activity is designated as 'pretransfer' editing and involves the hydrolysis of activated Val-AMP. The other activity is designated 'posttransfer' editing and involves deacylation of mischarged Val-tRNA(Ile). The polypeptide is Isoleucine--tRNA ligase (Shewanella halifaxensis (strain HAW-EB4)).